We begin with the raw amino-acid sequence, 90 residues long: Lantipeptide prochlorosin 1.7 (90 aa).

Positions Met1–Gly68 are excised as a propeptide. 2,3-didehydrobutyrine is present on residues Thr69 and Thr73. A cross-link (lanthionine (Ser-Cys)) is located at residues Ser76–Cys79. 2 consecutive cross-links (beta-methyllanthionine (Thr-Cys)) follow at residues Thr78–Cys82 and Thr81–Cys90.

Cross-links are proved in vitro, when coepressed in E.coli with the ProcM lanthionine synthetase. In terms of processing, the lanthionine residue has a DL configuration (with 2S,6R stereochemistry), whereas the beta-methyllanthionine residues have a DL configuration (with 2S,3S,6R stereochemistry). Post-translationally, maturation of prochlorosin involves the enzymatic conversion of Thr, and Ser into dehydrated AA and the formation of thioether bonds with cysteines. This is followed by membrane translocation and cleavage of the modified precursor.

It is found in the secreted. Functionally, lanthionine-containing peptide (lantipeptide) with unknown function. Does not show antibiotic activity against Lactococcus lactis 117 and Bacillus subtilis 6633 bacteria. Organisms that produce this peptide live in oligotrophic environments at very dilute concentrations, suggesting this peptide is not secreted to influence other bacteria. The sequence is that of Lantipeptide prochlorosin 1.7 from Prochlorococcus marinus (strain MIT 9313).